Consider the following 708-residue polypeptide: Probable GTP diphosphokinase RSH3, chloroplastic (708 aa).

Disordered stretches follow at residues 1–50 (MSLP…AAGG) and 109–134 (HSPVSVFQGPSSSPAASRSPPASWLA). The N-terminal 58 residues, 1-58 (MSLPAISLYTSPPPGAVYSSEFDPSSRGSSPPCSTAPPSTSHRPPAAAGGLSCLFSSP), are a transit peptide targeting the chloroplast. Low complexity-rich tracts occupy residues 29–41 (SSPPCSTAPPSTS) and 118–131 (PSSSPAASRSPPAS). The HD domain occupies 233–337 (YLQHCVETAV…IKLADRVHNM (105 aa)).

This sequence belongs to the RelA/SpoT family.

The protein localises to the plastid. It is found in the chloroplast. The catalysed reaction is GTP + ATP = guanosine 3'-diphosphate 5'-triphosphate + AMP. Its function is as follows. Probable ppGpp (guanosine 3'-diphosphate 5'-diphosphate) synthetase that may be involved in a rapid plant ppGpp-mediated response to pathogens and other stresses. The protein is Probable GTP diphosphokinase RSH3, chloroplastic (RSH3) of Oryza sativa subsp. japonica (Rice).